The sequence spans 366 residues: Bacteriochlorophyll a protein (366 aa).

Residues His111, His146, His290, His297, and His298 each contribute to the bacteriochlorophyll a site.

Homotrimer. Each subunit contains 7 molecules of bacteriochlorophyll a.

Intermediary in the transfer of excitation energy from the chlorophyll to the reaction centers. This Chlorobaculum tepidum (strain ATCC 49652 / DSM 12025 / NBRC 103806 / TLS) (Chlorobium tepidum) protein is Bacteriochlorophyll a protein (fmoA).